The chain runs to 642 residues: Threonine--tRNA ligase (642 aa).

One can recognise a TGS domain in the interval 1-61 (MPVITLPDGS…ETDAELSIIT (61 aa)). Positions 243-534 (DHRKIGKQLD…LIEEYAGRFP (292 aa)) are catalytic. Residues C334, H385, and H511 each contribute to the Zn(2+) site.

This sequence belongs to the class-II aminoacyl-tRNA synthetase family. In terms of assembly, homodimer. The cofactor is Zn(2+).

Its subcellular location is the cytoplasm. It catalyses the reaction tRNA(Thr) + L-threonine + ATP = L-threonyl-tRNA(Thr) + AMP + diphosphate + H(+). Functionally, catalyzes the attachment of threonine to tRNA(Thr) in a two-step reaction: L-threonine is first activated by ATP to form Thr-AMP and then transferred to the acceptor end of tRNA(Thr). Also edits incorrectly charged L-seryl-tRNA(Thr). The polypeptide is Threonine--tRNA ligase (Shewanella sp. (strain W3-18-1)).